Here is a 1980-residue protein sequence, read N- to C-terminus: Sodium channel protein type 8 subunit alpha (1980 aa).

2 disordered regions span residues 1 to 20 and 28 to 62; these read MAAR…FTPE and RIAE…LEAG. Over 1–132 the chain is Cytoplasmic; it reads MAARLLAPPG…RIAIKILIHS (132 aa). A compositionally biased stretch (basic and acidic residues) spans 28 to 61; it reads RIAESKLKKPPKADGSHREDDEDSKPKPNSDLEA. The I repeat unit spans residues 114-442; the sequence is ILSPFNLIRR…KAMLEQLKKQ (329 aa). The chain crosses the membrane as a helical span at residues 133–151; the sequence is VFSMIIMCTILTNCVFMTF. Over 152–158 the chain is Extracellular; it reads SNPPDWS. The helical transmembrane segment at 159–179 threads the bilayer; sequence KNVEYTFTGIYTFESLVKIIA. Over 180–193 the chain is Cytoplasmic; that stretch reads RGFCIDGFTFLRDP. Residues 194–211 form a helical membrane-spanning segment; it reads WNWLDFSVIMMAYITEFV. At 212 to 217 the chain is on the extracellular side; it reads NLGNVS. Asn215 carries N-linked (GlcNAc...) asparagine glycosylation. A helical transmembrane segment spans residues 218-234; the sequence is ALRTFRVLRALKTISVI. At 235-253 the chain is on the cytoplasmic side; sequence PGLKTIVGALIQSVKKLSD. A helical transmembrane segment spans residues 254 to 273; sequence VMILTVFCLSVFALIGLQLF. Topologically, residues 274-355 are extracellular; that stretch reads MGNLRNKCVV…PNYGYTSFDT (82 aa). Residues Cys281 and Cys333 are joined by a disulfide bond. 3 N-linked (GlcNAc...) asparagine glycosylation sites follow: Asn289, Asn295, and Asn308. Residue Asn326 is glycosylated (N-linked (GlcNAc...) (high mannose) asparagine). The pore-forming intramembrane region spans 356 to 380; that stretch reads FSWAFLALFRLMTQDYWENLYQLTL. Glu373 contacts Na(+). The Extracellular segment spans residues 381–387; that stretch reads RAAGKTY. Residues 388-408 form a helical membrane-spanning segment; sequence MIFFVLVIFVGSFYLVNLILA. The Cytoplasmic portion of the chain corresponds to 409–753; that stretch reads VVAMAYEEQN…EIVNLIVMDP (345 aa). Disordered regions lie at residues 446 to 530 and 568 to 602; these read AQAA…KAFR and FRGP…DSLF. The segment covering 474–486 has biased composition (low complexity); the sequence is PRSSSEISKLSSK. The span at 489 to 500 shows a compositional bias: basic residues; it reads KERRNRRKKRKQ. 2 stretches are compositionally biased toward basic and acidic residues: residues 501–530 and 586–602; these read KELS…KAFR and DEHS…DSLF. Phosphoserine is present on residues Ser518 and Ser520. One copy of the II repeat lies at 735-1007; the sequence is CHPYWIKLKE…QISVIRIKKG (273 aa). The helical transmembrane segment at 754–772 threads the bilayer; the sequence is FVDLAITICIVLNTLFMAM. The Extracellular portion of the chain corresponds to 773–783; that stretch reads EHHPMTPQFEH. The helical transmembrane segment at 784-803 threads the bilayer; it reads VLAVGNLVFTGIFTAEMFLK. Residues 804–817 lie on the Cytoplasmic side of the membrane; it reads LIAMDPYYYFQEGW. The chain crosses the membrane as a helical span at residues 818–837; it reads NIFDGFIVSLSLMELSLADV. The Extracellular portion of the chain corresponds to 838–839; it reads EG. Residues 840 to 857 form a helical membrane-spanning segment; sequence LSVLRSFRLLRVFKLAKS. The Cytoplasmic segment spans residues 858–873; it reads WPTLNMLIKIIGNSVG. The helical transmembrane segment at 874–892 threads the bilayer; sequence ALGNLTLVLAIIVFIFAVV. Over 893–921 the chain is Extracellular; it reads GMQLFGKSYKECVCKINQDCELPRWHMHD. Cys906 and Cys912 form a disulfide bridge. Positions 922–942 form an intramembrane region, pore-forming; sequence FFHSFLIVFRVLCGEWIETMW. Residues Glu936 and Glu939 each contribute to the Na(+) site. Residues 943 to 955 are Extracellular-facing; the sequence is DCMEVAGQAMCLI. Cys944 and Cys953 are disulfide-bonded. A helical transmembrane segment spans residues 956-976; the sequence is VFMMVMVIGNLVVLNLFLALL. Over 977-1199 the chain is Cytoplasmic; the sequence is LSSFSADNLA…TCFLIVEHNW (223 aa). The disordered stretch occupies residues 1107 to 1148; that stretch reads NLNTEDVSSESDPEGSKDKLDDTSSSEGSTIDIKPEVEEVPV. Residues 1180–1495 form an III repeat; sequence LGKSWWILRK…KKYYNAMKKL (316 aa). Residues 1200–1217 form a helical membrane-spanning segment; that stretch reads FETFIIFMILLSSGALAF. The Extracellular portion of the chain corresponds to 1218–1230; it reads EDIYIEQRKTIRT. Residues 1231–1249 form a helical membrane-spanning segment; it reads ILEYADKVFTYIFILEMLL. Over 1250-1263 the chain is Cytoplasmic; that stretch reads KWTAYGFVKFFTNA. Residues 1264 to 1282 form a helical membrane-spanning segment; sequence WCWLDFLIVAVSLVSLIAN. Residues 1283-1290 are Extracellular-facing; that stretch reads ALGYSELG. Residues 1291-1309 form a helical membrane-spanning segment; sequence AIKSLRTLRALRPLRALSR. The Cytoplasmic segment spans residues 1310 to 1326; the sequence is FEGMRVVVNALVGAIPS. The helical transmembrane segment at 1327–1346 threads the bilayer; that stretch reads IMNVLLVCLIFWLIFSIMGV. Topologically, residues 1347–1399 are extracellular; it reads NLFAGKYHYCFNETSEIRFEIEDVNNKTECEKLMEGNNTEIRWKNVKINFDNV. Cys1356 and Cys1376 are disulfide-bonded. N-linked (GlcNAc...) asparagine glycans are attached at residues Asn1358, Asn1372, and Asn1383. The segment at residues 1400–1421 is an intramembrane region (pore-forming); that stretch reads GAGYLALLQVATFKGWMDIMYA. The Extracellular segment spans residues 1422 to 1438; the sequence is AVDSRKPDEQPKYEDNI. Residues 1439 to 1460 traverse the membrane as a helical segment; sequence YMYIYFVIFIIFGSFFTLNLFI. Residues 1461 to 1523 lie on the Cytoplasmic side of the membrane; sequence GVIIDNFNQQ…IVFDFVTQQA (63 aa). Ser1497 bears the Phosphoserine; by PKC mark. One copy of the IV repeat lies at 1504 to 1801; that stretch reads IPRPLNKIQG…WEKFDPDATQ (298 aa). The helical transmembrane segment at 1524–1541 threads the bilayer; that stretch reads FDIVIMMLICLNMVTMMV. The Extracellular portion of the chain corresponds to 1542-1552; sequence ETDTQSKQMEN. A helical membrane pass occupies residues 1553-1571; it reads ILYWINLVFVIFFTCECVL. At 1572-1583 the chain is on the cytoplasmic side; sequence KMFALRHYYFTI. Residues 1584 to 1601 form a helical membrane-spanning segment; sequence GWNIFDFVVVILSIVGMF. Over 1602–1614 the chain is Extracellular; it reads LADIIEKYFVSPT. A helical membrane pass occupies residues 1615–1631; that stretch reads LFRVIRLARIGRILRLI. Residues 1632-1650 are Cytoplasmic-facing; the sequence is KGAKGIRTLLFALMMSLPA. The chain crosses the membrane as a helical span at residues 1651–1668; that stretch reads LFNIGLLLFLVMFIFSIF. At 1669–1690 the chain is on the extracellular side; that stretch reads GMSNFAYVKHEAGIDDMFNFET. The pore-forming intramembrane region spans 1691-1713; sequence FGNSMICLFQITTSAGWDGLLLP. Residues 1714–1742 are Extracellular-facing; that stretch reads ILNRPPDCSLDKEHPGSGFKGDCGNPSVG. A disulfide bridge links Cys1721 with Cys1736. The helical transmembrane segment at 1743–1765 threads the bilayer; the sequence is IFFFVSYIIISFLIVVNMYIAII. Over 1766–1980 the chain is Cytoplasmic; the sequence is LENFSVATEE…RQKEVRESKC (215 aa). The IQ domain occupies 1895–1924; sequence EEVSAVVLQRAYRGHLARRGFICKKTTSNK. Positions 1922 to 1980 are disordered; it reads SNKLENGGTHREKKESTPSTASLPSYDSVTKPEKEKQQRAEEGRRERAKRQKEVRESKC. Polar residues predominate over residues 1938-1949; that stretch reads TPSTASLPSYDS. Basic and acidic residues predominate over residues 1951-1980; the sequence is TKPEKEKQQRAEEGRRERAKRQKEVRESKC.

This sequence belongs to the sodium channel (TC 1.A.1.10) family. Nav1.6/SCN8A subfamily. In terms of assembly, the voltage-sensitive sodium channel consists of an ion-conducting pore-forming alpha subunit regulated by one or more beta-1 (SCN1B), beta-2 (SCN2B), beta-3 (SCN3B) and/or beta-4 (SCN4B) subunits. Beta-1 (SCN1B) and beta-3 (SCN3B) are non-covalently associated with alpha, while beta-2 (SCN2B) and beta-4 (SCN4B) are covalently linked by disulfide bonds. Interacts with NEDD4 and NEDD4L. Interacts with FGF13. Interacts with FGF14, GBG3, GBB2 and SCN1B. Interacts with TMEM233. Interacts with the conotoxin GVIIJ. Interacts with the spider beta/delta-theraphotoxin-Pre1a. Interacts with CALM1; the interaction modulates the inactivation rate of SCN8A. May be ubiquitinated by NEDD4L; which would promote its endocytosis. In terms of processing, phosphorylation at Ser-1497 by PKC in a highly conserved cytoplasmic loop slows inactivation of the sodium channel and reduces peak sodium currents. In terms of tissue distribution, expressed in the hippocampus with increased expression in epileptic tissue compared to normal adjacent tissue (at protein level). Expressed in non-neuronal tissues, such as monocytes/macrophages.

The protein localises to the cell membrane. The protein resides in the cell projection. Its subcellular location is the axon. It localises to the cytoplasmic vesicle. It is found in the podosome. It carries out the reaction Na(+)(in) = Na(+)(out). With respect to regulation, inhibited by tetrodotoxin and, more weakly, by its metabolite 4,9-ah-tetrodotoxin. Pore-forming subunit of a voltage-gated sodium channel complex assuming opened or closed conformations in response to the voltage difference across membranes and through which sodium ions selectively pass along their electrochemical gradient. Contributes to neuronal excitability by regulating action potential threshold and propagation. Its function is as follows. More specifically expressed in non-neuronal cells, could play a role in sodium release from intracellular compartments and participate in the control of podosomes formation and macrophages adhesion and movement. The protein is Sodium channel protein type 8 subunit alpha of Homo sapiens (Human).